The sequence spans 247 residues: uncharacterized protein (247 aa).

The next 6 helical transmembrane spans lie at 19-39, 73-93, 106-126, 155-175, 196-216, and 217-237; these read IFFT…SIMF, FFTS…AFFI, FLSF…YFII, YIQF…CPLF, YIYF…ILSQ, and FFLF…SCFY.

It belongs to the TatC family.

Its subcellular location is the mitochondrion membrane. This is an uncharacterized protein from Nephroselmis olivacea (Green alga).